The following is a 285-amino-acid chain: CCR4-NOT transcription complex subunit 7 (285 aa).

Positions 40, 42, 161, 230, and 278 each coordinate a divalent metal cation.

This sequence belongs to the CAF1 family. Component of the CCR4-NOT complex. The cofactor is Mn(2+). Mg(2+) serves as cofactor. It depends on Co(2+) as a cofactor.

The protein resides in the nucleus. It localises to the cytoplasm. The enzyme catalyses Exonucleolytic cleavage of poly(A) to 5'-AMP.. Functionally, has 3'-5' poly(A) exoribonuclease activity for synthetic poly(A) RNA substrate. Catalytic component of the CCR4-NOT complex which is one of the major cellular mRNA deadenylases and is linked to various cellular processes including bulk mRNA degradation, miRNA-mediated repression, translational repression during translational initiation and general transcription regulation. During miRNA-mediated repression the complex also seems to act as translational repressor during translational initiation. Additional complex functions may be a consequence of its influence on mRNA expression. The sequence is that of CCR4-NOT transcription complex subunit 7 (cnot7) from Xenopus tropicalis (Western clawed frog).